The primary structure comprises 270 residues: Putative phosphoenolpyruvate synthase regulatory protein (270 aa).

150 to 157 (GVSRCGKT) serves as a coordination point for ADP.

The protein belongs to the pyruvate, phosphate/water dikinase regulatory protein family. PSRP subfamily.

The catalysed reaction is [pyruvate, water dikinase] + ADP = [pyruvate, water dikinase]-phosphate + AMP + H(+). It catalyses the reaction [pyruvate, water dikinase]-phosphate + phosphate + H(+) = [pyruvate, water dikinase] + diphosphate. Bifunctional serine/threonine kinase and phosphorylase involved in the regulation of the phosphoenolpyruvate synthase (PEPS) by catalyzing its phosphorylation/dephosphorylation. The protein is Putative phosphoenolpyruvate synthase regulatory protein of Aeromonas salmonicida (strain A449).